The sequence spans 548 residues: Probable malate:quinone oxidoreductase (548 aa).

The segment at 521–548 (DKPQAADSTPKPQLKPQPVQKEVADIAL) is disordered. Residues 530 to 541 (PKPQLKPQPVQK) show a composition bias toward low complexity.

Belongs to the MQO family. FAD is required as a cofactor.

The enzyme catalyses (S)-malate + a quinone = a quinol + oxaloacetate. The protein operates within carbohydrate metabolism; tricarboxylic acid cycle; oxaloacetate from (S)-malate (quinone route): step 1/1. The polypeptide is Probable malate:quinone oxidoreductase (Escherichia coli O17:K52:H18 (strain UMN026 / ExPEC)).